Consider the following 175-residue polypeptide: Adenine phosphoribosyltransferase (175 aa).

This sequence belongs to the purine/pyrimidine phosphoribosyltransferase family. Homodimer.

The protein resides in the cytoplasm. It carries out the reaction AMP + diphosphate = 5-phospho-alpha-D-ribose 1-diphosphate + adenine. It participates in purine metabolism; AMP biosynthesis via salvage pathway; AMP from adenine: step 1/1. Catalyzes a salvage reaction resulting in the formation of AMP, that is energically less costly than de novo synthesis. This is Adenine phosphoribosyltransferase from Lactobacillus delbrueckii subsp. bulgaricus (strain ATCC 11842 / DSM 20081 / BCRC 10696 / JCM 1002 / NBRC 13953 / NCIMB 11778 / NCTC 12712 / WDCM 00102 / Lb 14).